The sequence spans 352 residues: Protein SIS1 (352 aa).

One can recognise a J domain in the interval 4 to 70 (ETKLYDLLGV…REIYDQYGLE (67 aa)). At S275 the chain carries Phosphoserine. The disordered stretch occupies residues 300 to 325 (VQPVQPSQTSTYPGQGMPTPKNPSQR). Residues 301 to 312 (QPVQPSQTSTYP) show a composition bias toward polar residues.

In terms of assembly, interacts with polyadenylate-binding protein PAB1.

It is found in the cytoplasm. It localises to the nucleus. Required for nuclear migration during mitosis. It is required for the normal initiation of translation. Might mediate the dissociation of a specific protein complex of the translation machinery. Essential for viability. The protein is Protein SIS1 (SIS1) of Saccharomyces cerevisiae (strain ATCC 204508 / S288c) (Baker's yeast).